The following is a 359-amino-acid chain: Non-functional pseudokinase ZRK2 (359 aa).

The span at 1–10 (MKSMVKKLKQ) shows a compositional bias: basic residues. A disordered region spans residues 1 to 20 (MKSMVKKLKQSLRSGSLEKR). The Protein kinase domain maps to 64–356 (LKATSNFGSS…KELKQIETLF (293 aa)). ATP contacts are provided by residues 70–78 (FGSSCFVTA) and Lys97.

Belongs to the protein kinase superfamily. Ser/Thr protein kinase family. ZRK subfamily.

This Arabidopsis thaliana (Mouse-ear cress) protein is Non-functional pseudokinase ZRK2.